The sequence spans 461 residues: MFDIALRSGPARGGVSHRVRTCDTVDGGYQCFPRLSHRWGQYSPYFSLANTGLPSEVPEKCELTFVQVLSRHGARYPTASKSKKYKSLIQAIQANATAYNGQSVFLRAYNYTLGSEDLTSFGEHQMINSGIKFYQRYAALTRDHVPFIRSSDSSRVVASGQLFIQGYEQSKAQDCDADHSQDHAAINVLISEAPGANNTLNHNTCAAFEADKLGDQVSAKYTALIAPPMAQRLHHDLPGVTLTDDQVIYLMDMCAYDTVATTPGATSLSPFCALFTDTEWSQYNYLQSLGKYYGYGAGNPLGPTQGVGFINELIARMTHSPVHDHTTSNRTLDAPGADSFPTNRTLYADFTHDNGMIPIFFALGLYNGSDPLPHDRIVPATQADGYSAAWAVPFAARAYIEMMQCGRETEPLVRVLINDRVAPLKGCNVDQLGRCKRSDFVNALSFAQDGGDWAKCGVSSK.

An intrachain disulfide couples cysteine 22 to cysteine 31. Positions 41, 42, 71, 72, 75, and 78 each coordinate 1D-myo-inositol hexakisphosphate. Intrachain disulfides connect cysteine 61-cysteine 405, cysteine 205-cysteine 456, cysteine 254-cysteine 272, and cysteine 427-cysteine 435. Residue histidine 72 is the Nucleophile of the active site. 2 N-linked (GlcNAc...) asparagine glycosylation sites follow: asparagine 95 and asparagine 110. A 1D-myo-inositol hexakisphosphate-binding site is contributed by arginine 155. N-linked (GlcNAc...) asparagine glycosylation occurs at asparagine 197. Lysine 291 contacts 1D-myo-inositol hexakisphosphate. N-linked (GlcNAc...) asparagine glycosylation is found at asparagine 329 and asparagine 343. Histidine 352 and aspartate 353 together coordinate 1D-myo-inositol hexakisphosphate. Asparagine 367 carries N-linked (GlcNAc...) asparagine glycosylation.

The protein belongs to the histidine acid phosphatase family. In terms of assembly, monomer. Post-translationally, glycosylated.

Its subcellular location is the secreted. The enzyme catalyses 1D-myo-inositol hexakisphosphate + H2O = 1D-myo-inositol 1,2,4,5,6-pentakisphosphate + phosphate. It carries out the reaction 1D-myo-inositol 1,2,4,5,6-pentakisphosphate + H2O = 1D-myo-inositol 1,2,5,6-tetrakisphosphate + phosphate. It catalyses the reaction 1D-myo-inositol 1,2,5,6-tetrakisphosphate + H2O = 1D-myo-inositol 1,2,6-trisphosphate + phosphate. The catalysed reaction is 1D-myo-inositol 1,2,6-trisphosphate + H2O = 1D-myo-inositol 1,2-bisphosphate + phosphate. The enzyme catalyses 1D-myo-inositol 1,2-bisphosphate + H2O = 1D-myo-inositol 2-phosphate + phosphate. Functionally, catalyzes the phosphate monoester hydrolysis of phytic acid (myo-inositol hexakisphosphate), which results in the stepwise formation of myo-inositol pentakis-, tetrakis-, tris-, bis-, and monophosphates, as well as the liberation of inorganic phosphate. Myo-inositol 2-monophosphate is the end product. In Penicillium oxalicum, this protein is Phytase A.